The sequence spans 359 residues: Phospho-N-acetylmuramoyl-pentapeptide-transferase (359 aa).

10 helical membrane passes run glutamine 3–isoleucine 23, valine 55–phenylalanine 75, isoleucine 80–leucine 100, threonine 117–phenylalanine 137, isoleucine 156–alanine 176, leucine 187–phenylalanine 207, leucine 231–alanine 251, isoleucine 255–threonine 275, isoleucine 280–isoleucine 300, and phenylalanine 334–leucine 354.

The protein belongs to the glycosyltransferase 4 family. MraY subfamily. Requires Mg(2+) as cofactor.

It localises to the cell inner membrane. The catalysed reaction is UDP-N-acetyl-alpha-D-muramoyl-L-alanyl-gamma-D-glutamyl-meso-2,6-diaminopimeloyl-D-alanyl-D-alanine + di-trans,octa-cis-undecaprenyl phosphate = di-trans,octa-cis-undecaprenyl diphospho-N-acetyl-alpha-D-muramoyl-L-alanyl-D-glutamyl-meso-2,6-diaminopimeloyl-D-alanyl-D-alanine + UMP. Its pathway is cell wall biogenesis; peptidoglycan biosynthesis. Its function is as follows. Catalyzes the initial step of the lipid cycle reactions in the biosynthesis of the cell wall peptidoglycan: transfers peptidoglycan precursor phospho-MurNAc-pentapeptide from UDP-MurNAc-pentapeptide onto the lipid carrier undecaprenyl phosphate, yielding undecaprenyl-pyrophosphoryl-MurNAc-pentapeptide, known as lipid I. This chain is Phospho-N-acetylmuramoyl-pentapeptide-transferase, found in Mycobacterium marinum (strain ATCC BAA-535 / M).